The following is a 300-amino-acid chain: 4-hydroxybenzoate octaprenyltransferase (300 aa).

Helical transmembrane passes span 32 to 52, 55 to 75, 108 to 128, 149 to 169, 178 to 198, 222 to 242, 246 to 266, and 278 to 298; these read IGTYLLLWPTLWALWLASEGA, LKNLFIFVFGVLLMRSAGCVI, LFGILVGVSFILVLFTNALTI, YLPQVVLGAAFAWGIPMAFAA, AWLLYTATVVWTVAYDTMYAM, AAVAGLQVLTLGVLFMVGAQH, VYYQVSLIIVAVLFVYQQHLI, and FLNNHWVGAAVFLGLVLEFLF.

The protein belongs to the UbiA prenyltransferase family. The cofactor is Mg(2+).

It localises to the cell inner membrane. The enzyme catalyses all-trans-octaprenyl diphosphate + 4-hydroxybenzoate = 4-hydroxy-3-(all-trans-octaprenyl)benzoate + diphosphate. The protein operates within cofactor biosynthesis; ubiquinone biosynthesis. Its function is as follows. Catalyzes the prenylation of para-hydroxybenzoate (PHB) with an all-trans polyprenyl group. Mediates the second step in the final reaction sequence of ubiquinone-8 (UQ-8) biosynthesis, which is the condensation of the polyisoprenoid side chain with PHB, generating the first membrane-bound Q intermediate 3-octaprenyl-4-hydroxybenzoate. The sequence is that of 4-hydroxybenzoate octaprenyltransferase from Hahella chejuensis (strain KCTC 2396).